The primary structure comprises 347 residues: RNA 3'-terminal phosphate cyclase (347 aa).

ATP-binding positions include Q101 and 286 to 289 (HMAD). Residue H312 is the Tele-AMP-histidine intermediate of the active site.

It belongs to the RNA 3'-terminal cyclase family. Type 1 subfamily.

It is found in the cytoplasm. It catalyses the reaction a 3'-end 3'-phospho-ribonucleotide-RNA + ATP = a 3'-end 2',3'-cyclophospho-ribonucleotide-RNA + AMP + diphosphate. In terms of biological role, catalyzes the conversion of 3'-phosphate to a 2',3'-cyclic phosphodiester at the end of RNA. The mechanism of action of the enzyme occurs in 3 steps: (A) adenylation of the enzyme by ATP; (B) transfer of adenylate to an RNA-N3'P to produce RNA-N3'PP5'A; (C) and attack of the adjacent 2'-hydroxyl on the 3'-phosphorus in the diester linkage to produce the cyclic end product. The biological role of this enzyme is unknown but it is likely to function in some aspects of cellular RNA processing. The chain is RNA 3'-terminal phosphate cyclase from Pyrobaculum neutrophilum (strain DSM 2338 / JCM 9278 / NBRC 100436 / V24Sta) (Thermoproteus neutrophilus).